The chain runs to 657 residues: Katanin p80 WD40 repeat-containing subunit B1 (657 aa).

WD repeat units follow at residues 18–58, 61–100, 103–142, 145–184, 187–226, and 229–269; these read AHSS…CVMS, GHTTPIESLQISAKEELIVAGSQSGSIRVWDLEAAKILRT, GHKANICSLDFHPYGSFVASGSLDTDIKLWDVRRKGCIFK, SHTQAVRCLRFSPDGKWLASAADDHTVKLWDLTAGKVMFE, GHSGPVNVVEFHPSEYLLASGSSDRTIRFWDLEKFHVVSC, and EEAT…DVVV. 2 disordered regions span residues 318–410 and 423–454; these read NNEL…EDEP and VEVQTPLPKQELPETFQRPPIASSTPMPRAEP. Positions 325–345 are enriched in polar residues; that stretch reads PTPTGSSLRRSYDRPSTSCSK. Residues 351-385 are compositionally biased toward basic and acidic residues; sequence HSSESERRSPSSEEDRDEKESKAEIQNPEDYKEIF.

The protein belongs to the WD repeat KATNB1 family. As to quaternary structure, interacts with KATNA1. This interaction enhances the microtubule binding and severing activity of KATNA1 and also targets this activity to the centrosome.

It localises to the cytoplasm. Its subcellular location is the cytoskeleton. It is found in the microtubule organizing center. The protein localises to the centrosome. The protein resides in the spindle pole. It localises to the spindle. Its function is as follows. Participates in a complex which severs microtubules in an ATP-dependent manner. May act to target the enzymatic subunit of this complex to sites of action such as the centrosome. Microtubule severing may promote rapid reorganization of cellular microtubule arrays and the release of microtubules from the centrosome following nucleation. This chain is Katanin p80 WD40 repeat-containing subunit B1, found in Gallus gallus (Chicken).